The chain runs to 525 residues: Lysine--tRNA ligase (525 aa).

Positions 44-52 (PSGLPHIGT) match the 'HIGH' region motif. A 'KMSKS' region motif is present at residues 290-294 (KISKS). ATP is bound at residue K293.

Belongs to the class-I aminoacyl-tRNA synthetase family.

The protein localises to the cytoplasm. It carries out the reaction tRNA(Lys) + L-lysine + ATP = L-lysyl-tRNA(Lys) + AMP + diphosphate. This chain is Lysine--tRNA ligase, found in Rickettsia felis (strain ATCC VR-1525 / URRWXCal2) (Rickettsia azadi).